The chain runs to 417 residues: D-amino acid dehydrogenase (417 aa).

Residue 3 to 17 participates in FAD binding; the sequence is VIVLGSGVIGVTAAW.

The protein belongs to the DadA oxidoreductase family. Requires FAD as cofactor.

The enzyme catalyses a D-alpha-amino acid + A + H2O = a 2-oxocarboxylate + AH2 + NH4(+). The protein operates within amino-acid degradation; D-alanine degradation; NH(3) and pyruvate from D-alanine: step 1/1. Functionally, oxidative deamination of D-amino acids. The polypeptide is D-amino acid dehydrogenase (Methylobacillus flagellatus (strain ATCC 51484 / DSM 6875 / VKM B-1610 / KT)).